Consider the following 356-residue polypeptide: Protein RecA (356 aa).

79–86 (GPESSGKT) contacts ATP.

It belongs to the RecA family.

It localises to the cytoplasm. Can catalyze the hydrolysis of ATP in the presence of single-stranded DNA, the ATP-dependent uptake of single-stranded DNA by duplex DNA, and the ATP-dependent hybridization of homologous single-stranded DNAs. It interacts with LexA causing its activation and leading to its autocatalytic cleavage. The sequence is that of Protein RecA from Borrelia hermsii (strain HS1 / DAH).